The following is a 333-amino-acid chain: Fructose-1,6-bisphosphatase class 1 (333 aa).

Residues Glu89, Asp110, Leu112, and Asp113 each contribute to the Mg(2+) site. Substrate-binding positions include 113–116 (DGSS), Asn206, Tyr239, 257–259 (YLY), and Lys269. Position 275 (Glu275) interacts with Mg(2+).

It belongs to the FBPase class 1 family. In terms of assembly, homotetramer. Mg(2+) serves as cofactor.

Its subcellular location is the cytoplasm. It catalyses the reaction beta-D-fructose 1,6-bisphosphate + H2O = beta-D-fructose 6-phosphate + phosphate. The protein operates within carbohydrate biosynthesis; gluconeogenesis. This Sodalis glossinidius (strain morsitans) protein is Fructose-1,6-bisphosphatase class 1.